Here is a 399-residue protein sequence, read N- to C-terminus: Unsaturated chondroitin disaccharide hydrolase (399 aa).

Catalysis depends on Asp116, which acts as the Nucleophile. Substrate contacts are provided by Asp116, Asp176, Gly234, Thr236, Arg248, Trp252, Ser366, and Ser369. Residue Asp176 is the Proton donor of the active site.

The protein belongs to the glycosyl hydrolase 88 family. As to quaternary structure, monomer.

It carries out the reaction beta-D-4-deoxy-Delta(4)-GlcpA-(1-&gt;3)-beta-D-GalpNAc6S + H2O = N-acetyl-beta-D-galactosamine 6-sulfate + 5-dehydro-4-deoxy-D-glucuronate. In terms of biological role, catalyzes the hydrolysis of unsaturated hyaluronate and chondroitin disaccharides. Also degrades unsaturated heparin disaccharides. Releases 4-deoxy-4,5-didehydro D-glucuronic acid or 4-deoxy-4,5-didehydro L-iduronic acid from chondroitin disaccharides, hyaluronan disaccharides and heparin disaccharides and cleaves both glycosidic (1-&gt;3) and (1-&gt;4) bonds. Prefers sulfated glycosaminoglycans compared to unsulfated glycosaminoglycans. Probably required for mammalian cells invasion through the degradation of extracellular sulfated glycosaminoglycans such as chondroitin and hyaluronan. This chain is Unsaturated chondroitin disaccharide hydrolase (ugl), found in Streptococcus pyogenes serotype M1.